The sequence spans 174 residues: Large ribosomal subunit protein uL10 (174 aa).

It belongs to the universal ribosomal protein uL10 family. Part of the ribosomal stalk of the 50S ribosomal subunit. The N-terminus interacts with L11 and the large rRNA to form the base of the stalk. The C-terminus forms an elongated spine to which L12 dimers bind in a sequential fashion forming a multimeric L10(L12)X complex.

Its function is as follows. Forms part of the ribosomal stalk, playing a central role in the interaction of the ribosome with GTP-bound translation factors. This is Large ribosomal subunit protein uL10 from Trichlorobacter lovleyi (strain ATCC BAA-1151 / DSM 17278 / SZ) (Geobacter lovleyi).